Reading from the N-terminus, the 356-residue chain is S-adenosylmethionine:tRNA ribosyltransferase-isomerase (356 aa).

It belongs to the QueA family. Monomer.

The protein localises to the cytoplasm. The enzyme catalyses 7-aminomethyl-7-carbaguanosine(34) in tRNA + S-adenosyl-L-methionine = epoxyqueuosine(34) in tRNA + adenine + L-methionine + 2 H(+). The protein operates within tRNA modification; tRNA-queuosine biosynthesis. Functionally, transfers and isomerizes the ribose moiety from AdoMet to the 7-aminomethyl group of 7-deazaguanine (preQ1-tRNA) to give epoxyqueuosine (oQ-tRNA). This Escherichia coli O127:H6 (strain E2348/69 / EPEC) protein is S-adenosylmethionine:tRNA ribosyltransferase-isomerase.